Reading from the N-terminus, the 57-residue chain is Potassium channel toxin MeuTXKalpha2 (57 aa).

A signal peptide spans 1 to 19 (MSRLYAIILIALVFNVIMT). A propeptide spanning residues 20 to 28 (IMPDMKVEA) is cleaved from the precursor. Disulfide bonds link Cys-31-Cys-47, Cys-34-Cys-52, and Cys-38-Cys-54.

The protein belongs to the short scorpion toxin superfamily. Potassium channel inhibitor family. Alpha-KTx 08 subfamily. As to expression, expressed by the venom gland.

It is found in the secreted. Inhibits Kv1.1/KCNA1, Kv1.3/KCNA3 and Shaker potassium channels. The chain is Potassium channel toxin MeuTXKalpha2 from Mesobuthus eupeus (Lesser Asian scorpion).